We begin with the raw amino-acid sequence, 75 residues long: Exodeoxyribonuclease 7 small subunit (75 aa).

It belongs to the XseB family. Heterooligomer composed of large and small subunits.

Its subcellular location is the cytoplasm. It catalyses the reaction Exonucleolytic cleavage in either 5'- to 3'- or 3'- to 5'-direction to yield nucleoside 5'-phosphates.. Its function is as follows. Bidirectionally degrades single-stranded DNA into large acid-insoluble oligonucleotides, which are then degraded further into small acid-soluble oligonucleotides. The polypeptide is Exodeoxyribonuclease 7 small subunit (Listeria innocua serovar 6a (strain ATCC BAA-680 / CLIP 11262)).